A 141-amino-acid chain; its full sequence is Large ribosomal subunit protein uL11 (141 aa).

Belongs to the universal ribosomal protein uL11 family. In terms of assembly, part of the ribosomal stalk of the 50S ribosomal subunit. Interacts with L10 and the large rRNA to form the base of the stalk. L10 forms an elongated spine to which L12 dimers bind in a sequential fashion forming a multimeric L10(L12)X complex. In terms of processing, one or more lysine residues are methylated.

Functionally, forms part of the ribosomal stalk which helps the ribosome interact with GTP-bound translation factors. The protein is Large ribosomal subunit protein uL11 of Synechococcus sp. (strain RCC307).